A 280-amino-acid polypeptide reads, in one-letter code: Ribonuclease Z (280 aa).

Residues His61, His63, Asp65, His66, His153, Asp176, and His240 each contribute to the Zn(2+) site. The active-site Proton acceptor is Asp65.

The protein belongs to the RNase Z family. As to quaternary structure, homodimer. Zn(2+) is required as a cofactor.

It carries out the reaction Endonucleolytic cleavage of RNA, removing extra 3' nucleotides from tRNA precursor, generating 3' termini of tRNAs. A 3'-hydroxy group is left at the tRNA terminus and a 5'-phosphoryl group is left at the trailer molecule.. Its function is as follows. Zinc phosphodiesterase, which displays some tRNA 3'-processing endonuclease activity. Probably involved in tRNA maturation, by removing a 3'-trailer from precursor tRNA. In Mycobacterium bovis (strain BCG / Pasteur 1173P2), this protein is Ribonuclease Z.